The chain runs to 83 residues: Probable calcium-binding protein CML29 (83 aa).

EF-hand domains are found at residues 5–40 (TEKAEHDRIFKKFDANGDGKISAAELEEALKTLGSV) and 43–75 (DDVKRMMAEIDTDGDGNISYQEFTDFAGANRGL). 10 residues coordinate Ca(2+): aspartate 18, asparagine 20, aspartate 22, lysine 24, glutamate 29, aspartate 53, aspartate 55, aspartate 57, asparagine 59, and glutamate 64.

Its function is as follows. Potential calcium sensor. The sequence is that of Probable calcium-binding protein CML29 (CML29) from Arabidopsis thaliana (Mouse-ear cress).